We begin with the raw amino-acid sequence, 569 residues long: Pyruvate decarboxylase (569 aa).

Residues Asp-38 and His-124 each contribute to the pyruvate site. Thiamine diphosphate is bound by residues Thr-398 and 421-423; that span reads GSI. Position 451 (Asp-451) interacts with Mg(2+). Residues 452 to 453 and 478 to 483 contribute to the thiamine diphosphate site; these read GS and NEGYTI. Mg(2+) is bound by residues Asn-478 and Gly-480. Residue Glu-484 coordinates pyruvate.

The protein belongs to the TPP enzyme family. As to quaternary structure, homotetramer. It depends on Mg(2+) as a cofactor. Thiamine diphosphate is required as a cofactor.

It catalyses the reaction a 2-oxocarboxylate + H(+) = an aldehyde + CO2. It carries out the reaction pyruvate + H(+) = acetaldehyde + CO2. The polypeptide is Pyruvate decarboxylase (pdcA) (Aspergillus fumigatus (strain ATCC MYA-4609 / CBS 101355 / FGSC A1100 / Af293) (Neosartorya fumigata)).